The primary structure comprises 148 residues: MKVLLIKDVKGLGKAGEIKEVKDGYGNNFLIGKGFAKAATPDVLRQYEAAQKRKAEELKYEIANLEKLKEELAKVTVVVKKTLGANGSLFGSVSKEEIAAELEKTHHLVVEKKAIDLDTHLKAVGLYDVSIKLGHSINATLKVDVQGE.

Belongs to the bacterial ribosomal protein bL9 family.

Binds to the 23S rRNA. The chain is Large ribosomal subunit protein bL9 from Campylobacter concisus (strain 13826).